A 449-amino-acid chain; its full sequence is tRNA (guanine(37)-N(1))-methyltransferase (449 aa).

S-adenosyl-L-methionine-binding positions include histidine 216, 254–255, 282–283, and asparagine 345; these read DL and DG.

Belongs to the class I-like SAM-binding methyltransferase superfamily. TRM5/TYW2 family. Monomer.

It localises to the mitochondrion matrix. The protein localises to the nucleus. It is found in the cytoplasm. The catalysed reaction is guanosine(37) in tRNA + S-adenosyl-L-methionine = N(1)-methylguanosine(37) in tRNA + S-adenosyl-L-homocysteine + H(+). Its function is as follows. Specifically methylates the N1 position of guanosine-37 in various cytoplasmic and mitochondrial tRNAs. Methylation is not dependent on the nature of the nucleoside 5' of the target nucleoside. This is the first step in the biosynthesis of wybutosine (yW), a modified base adjacent to the anticodon of tRNAs and required for accurate decoding. The chain is tRNA (guanine(37)-N(1))-methyltransferase from Candida albicans (strain SC5314 / ATCC MYA-2876) (Yeast).